We begin with the raw amino-acid sequence, 86 residues long: Large ribosomal subunit protein eL20 (86 aa).

This sequence belongs to the eukaryotic ribosomal protein eL20 family. In terms of assembly, part of the 50S ribosomal subunit. Binds 23S rRNA.

The protein is Large ribosomal subunit protein eL20 of Metallosphaera sedula (strain ATCC 51363 / DSM 5348 / JCM 9185 / NBRC 15509 / TH2).